The sequence spans 99 residues: DNA-directed RNA polymerase subunit omega (99 aa).

This sequence belongs to the RNA polymerase subunit omega family. As to quaternary structure, the RNAP catalytic core consists of 2 alpha, 1 beta, 1 beta' and 1 omega subunit. When a sigma factor is associated with the core the holoenzyme is formed, which can initiate transcription.

The enzyme catalyses RNA(n) + a ribonucleoside 5'-triphosphate = RNA(n+1) + diphosphate. Promotes RNA polymerase assembly. Latches the N- and C-terminal regions of the beta' subunit thereby facilitating its interaction with the beta and alpha subunits. This Xanthomonas axonopodis pv. citri (strain 306) protein is DNA-directed RNA polymerase subunit omega.